Here is an 801-residue protein sequence, read N- to C-terminus: Elongation factor G, mitochondrial (801 aa).

The N-terminal 62 residues, 1–62, are a transit peptide targeting the mitochondrion; the sequence is MRTPTLARLP…LSKHFQQRRN (62 aa). One can recognise a tr-type G domain in the interval 99–386; it reads SRVRNIGIAA…GVIDYLPNPS (288 aa). GTP is bound by residues 108 to 115, 184 to 188, and 238 to 241; these read AHIDSGKT, DTPGH, and NKMD.

It belongs to the TRAFAC class translation factor GTPase superfamily. Classic translation factor GTPase family. EF-G/EF-2 subfamily.

It localises to the mitochondrion. The protein operates within protein biosynthesis; polypeptide chain elongation. In terms of biological role, mitochondrial GTPase that catalyzes the GTP-dependent ribosomal translocation step during translation elongation. During this step, the ribosome changes from the pre-translocational (PRE) to the post-translocational (POST) state as the newly formed A-site-bound peptidyl-tRNA and P-site-bound deacylated tRNA move to the P and E sites, respectively. Catalyzes the coordinated movement of the two tRNA molecules, the mRNA and conformational changes in the ribosome. In Aspergillus niger (strain ATCC MYA-4892 / CBS 513.88 / FGSC A1513), this protein is Elongation factor G, mitochondrial (mef1).